We begin with the raw amino-acid sequence, 554 residues long: Acurin A biosynthesis cluster MFS-type transporter (554 aa).

The next 5 helical transmembrane spans lie at 24-44, 60-80, 96-116, 123-143, and 151-171; these read WLIF…TSII, LYIW…AIVG, LLIF…GMLL, GLGG…MVSL, and GILG…GGGF. N-linked (GlcNAc...) asparagine glycosylation is present at Asn174. 3 helical membrane-spanning segments follow: residues 179-199, 219-239, and 251-271; these read WIFY…VTLL, WGGI…LTWA, and IVPL…EALP. Asn283 is a glycosylation site (N-linked (GlcNAc...) asparagine). The next 6 helical transmembrane spans lie at 289-309, 324-344, 352-372, 385-405, 417-437, and 496-516; these read LFVM…FLPI, VMLF…GILM, SFQY…TLLD, ILFG…ILAS, TWIF…AAVF, and VWQV…LVKA.

It belongs to the major facilitator superfamily.

It is found in the membrane. Functionally, MFS-type transporter that may have a role in the biosynthesis of acurin A, a highly reduced polyketide coupled to a serine via a peptide bond; either in extra- or intracellular transport. In Aspergillus aculeatus (strain ATCC 16872 / CBS 172.66 / WB 5094), this protein is Acurin A biosynthesis cluster MFS-type transporter.